Consider the following 290-residue polypeptide: 33 kDa chaperonin (290 aa).

Intrachain disulfides connect Cys-235–Cys-237 and Cys-268–Cys-271.

It belongs to the HSP33 family. In terms of processing, under oxidizing conditions two disulfide bonds are formed involving the reactive cysteines. Under reducing conditions zinc is bound to the reactive cysteines and the protein is inactive.

The protein localises to the cytoplasm. Functionally, redox regulated molecular chaperone. Protects both thermally unfolding and oxidatively damaged proteins from irreversible aggregation. Plays an important role in the bacterial defense system toward oxidative stress. This is 33 kDa chaperonin from Streptococcus pyogenes serotype M4 (strain MGAS10750).